A 1135-amino-acid polypeptide reads, in one-letter code: Large proline-rich protein bag6-A (1135 aa).

The 76-residue stretch at 7-82 (MEVTVKTLDS…HLVERAPPQT (76 aa)) folds into the Ubiquitin-like domain. 8 disordered regions span residues 76–114 (ERAPPQTQPSTGGPSTSSSTSPTSSNAAPVPGAPERNGN), 194–238 (EQAA…SPSE), 350–407 (TGNG…PHPR), 498–522 (SFQFQPGTATTPPGPGGATTTVPGA), 552–612 (QGGS…QHLS), 661–698 (PVSTAPTQSASQAPPPSSPPPPPAHSSPPPAAAPESLP), 1075–1099 (KATGAKPESSAECVRRELDNSEAQG), and 1116–1135 (NESYSAQRFPNTQRAFRGDP). Residues 79-100 (PPQTQPSTGGPSTSSSTSPTSS) show a composition bias toward low complexity. Residues 212–227 (RETLPQTTQNTDGQSN) are compositionally biased toward polar residues. Positions 228-237 (TTPTSHPSPS) are enriched in low complexity. Positions 367–387 (QPPSTNTSEPQRPNTENQPPS) are enriched in polar residues. Composition is skewed to low complexity over residues 555–600 (SSTS…SVPS) and 663–672 (STAPTQSASQ). The span at 673–692 (APPPSSPPPPPAHSSPPPAA) shows a compositional bias: pro residues. The span at 1087-1099 (CVRRELDNSEAQG) shows a compositional bias: basic and acidic residues. The span at 1116-1129 (NESYSAQRFPNTQR) shows a compositional bias: polar residues.

In terms of assembly, component of the bag6/bat3 complex.

It is found in the cytoplasm. The protein localises to the cytosol. The protein resides in the nucleus. Its subcellular location is the secreted. It localises to the extracellular exosome. Its function is as follows. ATP-independent molecular chaperone preventing the aggregation of misfolded and hydrophobic patches-containing proteins. Functions as part of a cytosolic protein quality control complex, the bag6/bat3 complex, which maintains these client proteins in a soluble state and participates in their proper delivery to the endoplasmic reticulum or alternatively can promote their sorting to the proteasome where they undergo degradation. The bag6/bat3 complex is involved in the post-translational delivery of tail-anchored/type II transmembrane proteins to the endoplasmic reticulum membrane. Similarly, the bag6/bat3 complex also functions as a sorting platform for proteins of the secretory pathway that are mislocalized to the cytosol either delivering them to the proteasome for degradation or to the endoplasmic reticulum. The bag6/bat3 complex also plays a role in the endoplasmic reticulum-associated degradation (ERAD), a quality control mechanism that eliminates unwanted proteins of the endoplasmic reticulum through their retrotranslocation to the cytosol and their targeting to the proteasome. It maintains these retrotranslocated proteins in an unfolded yet soluble state condition in the cytosol to ensure their proper delivery to the proteasome. Also required for selective ubiquitin-mediated degradation of defective nascent chain polypeptides by the proteasome. Also involved in endoplasmic reticulum stress-induced pre-emptive quality control, a mechanism that selectively attenuates the translocation of newly synthesized proteins into the endoplasmic reticulum and reroutes them to the cytosol for proteasomal degradation. May ensure the proper degradation of these proteins and thereby protects the endoplasmic reticulum from protein overload upon stress. By stabilizing a large spectrum of proteins, may indirectly affect different biological processes including apoptosis. By controlling the steady-state expression of the IGF1R receptor, indirectly regulates the insulin-like growth factor receptor signaling pathway. When nuclear, may also act as a component of some chromatin regulator complex. The sequence is that of Large proline-rich protein bag6-A from Xenopus laevis (African clawed frog).